A 489-amino-acid polypeptide reads, in one-letter code: UDP-N-acetylmuramate--L-alanine ligase (489 aa).

Residue 130–136 participates in ATP binding; it reads GTHGKTS.

It belongs to the MurCDEF family.

The protein localises to the cytoplasm. It carries out the reaction UDP-N-acetyl-alpha-D-muramate + L-alanine + ATP = UDP-N-acetyl-alpha-D-muramoyl-L-alanine + ADP + phosphate + H(+). It participates in cell wall biogenesis; peptidoglycan biosynthesis. Its function is as follows. Cell wall formation. This Corynebacterium efficiens (strain DSM 44549 / YS-314 / AJ 12310 / JCM 11189 / NBRC 100395) protein is UDP-N-acetylmuramate--L-alanine ligase.